A 180-amino-acid polypeptide reads, in one-letter code: Glycoprotein Xg (180 aa).

The signal sequence occupies residues 1-21; that stretch reads MESWWGLPCLAFLCFLMHARG. At 22-142 the chain is on the extracellular side; it reads QRDFDLADAL…GNPEGNMVAK (121 aa). The segment at 28 to 133 is disordered; it reads ADALDDPEPT…HGGDHHSTYG (106 aa). Over residues 47-57 the composition is skewed to pro residues; sequence KPKPPYYPQPE. The helical transmembrane segment at 143–163 threads the bilayer; it reads IVSPIVSVVVVTLLGAAASYF. At 164–180 the chain is on the cytoplasmic side; the sequence is KLNNRRNCFRTHEPENV.

The protein belongs to the CD99 family. O-glycosylated. In terms of tissue distribution, expressed in erythroid tissues, including thymus, bone marrow and fetal liver, and in several nonerythroid tissues, such as heart, placenta, skeletal muscle, thyroid and trachea, as well as in skin fibroblasts. Expression is low or undetectable in other tissues.

It is found in the cell membrane. The chain is Glycoprotein Xg (XG) from Homo sapiens (Human).